Consider the following 920-residue polypeptide: Isoleucine--tRNA ligase (920 aa).

The short motif at 57–67 is the 'HIGH' region element; it reads PYANGDIHLGH. Glu-560 contributes to the L-isoleucyl-5'-AMP binding site. Residues 601–605 carry the 'KMSKS' region motif; that stretch reads KMSKS. Lys-604 lines the ATP pocket. Zn(2+) is bound by residues Cys-890, Cys-893, Cys-910, and Cys-913.

Belongs to the class-I aminoacyl-tRNA synthetase family. IleS type 1 subfamily. In terms of assembly, monomer. Requires Zn(2+) as cofactor.

The protein resides in the cytoplasm. It catalyses the reaction tRNA(Ile) + L-isoleucine + ATP = L-isoleucyl-tRNA(Ile) + AMP + diphosphate. In terms of biological role, catalyzes the attachment of isoleucine to tRNA(Ile). As IleRS can inadvertently accommodate and process structurally similar amino acids such as valine, to avoid such errors it has two additional distinct tRNA(Ile)-dependent editing activities. One activity is designated as 'pretransfer' editing and involves the hydrolysis of activated Val-AMP. The other activity is designated 'posttransfer' editing and involves deacylation of mischarged Val-tRNA(Ile). The sequence is that of Isoleucine--tRNA ligase from Caldicellulosiruptor saccharolyticus (strain ATCC 43494 / DSM 8903 / Tp8T 6331).